A 409-amino-acid chain; its full sequence is PPE family protein PPE32 (409 aa).

Belongs to the mycobacterial PPE family. As to quaternary structure, interacts with host Toll-like receptor 2 (TLR2).

It is found in the secreted. Its subcellular location is the cell wall. It localises to the cell surface. Functionally, virulence factor that modulates the production of host cytokines. This Mycobacterium tuberculosis (strain CDC 1551 / Oshkosh) protein is PPE family protein PPE32.